The sequence spans 178 residues: V-type proton ATPase subunit c''2 (178 aa).

The Lumenal portion of the chain corresponds to 1 to 24 (MSGVAIHASSWGAALVRISPYTFS). Residues 25–45 (AIGIAISIGVSVLGAAWGIYI) form a helical membrane-spanning segment. Residues 46–64 (TGSSLIGAAIEAPRITSKN) are Cytoplasmic-facing. Residues 65-85 (LISVIFCEAVAIYGVIVAIIL) form a helical membrane-spanning segment. Topologically, residues 86 to 108 (QTKLESVPSSKMYDAESLRAGYA) are lumenal. A helical transmembrane segment spans residues 109-129 (IFASGIIVGFANLVCGLCVGI). At 130–147 (IGSSCALSDAQNSTLFVK) the chain is on the cytoplasmic side. The helical transmembrane segment at 148–168 (ILVIEIFGSALGLFGVIVGII) threads the bilayer. At 169–178 (MSAQATWPTK) the chain is on the lumenal side.

Belongs to the V-ATPase proteolipid subunit family. As to quaternary structure, V-ATPase is a heteromultimeric enzyme composed of a peripheral catalytic V1 complex (components A to H) attached to an integral membrane V0 proton pore complex (components: a, c, c'', d and e). The proteolipid components c and c'' are present as a hexameric ring that forms the proton-conducting pore. Interacts with APD2.

The protein resides in the endoplasmic reticulum membrane. It localises to the golgi apparatus membrane. Functionally, proton-conducting pore forming subunit of the membrane integral V0 complex of vacuolar ATPase. V-ATPase is responsible for acidifying a variety of intracellular compartments in eukaryotic cells. The sequence is that of V-type proton ATPase subunit c''2 (VHA-c''2) from Arabidopsis thaliana (Mouse-ear cress).